The following is a 79-amino-acid chain: Acyl carrier protein (79 aa).

Positions 2–77 constitute a Carrier domain; the sequence is SEIGERVKKI…DATKFLEKNA (76 aa). Serine 37 carries the post-translational modification O-(pantetheine 4'-phosphoryl)serine.

The protein belongs to the acyl carrier protein (ACP) family. 4'-phosphopantetheine is transferred from CoA to a specific serine of apo-ACP by AcpS. This modification is essential for activity because fatty acids are bound in thioester linkage to the sulfhydryl of the prosthetic group.

It is found in the cytoplasm. The protein operates within lipid metabolism; fatty acid biosynthesis. Its function is as follows. Carrier of the growing fatty acid chain in fatty acid biosynthesis. The polypeptide is Acyl carrier protein (Nitrobacter hamburgensis (strain DSM 10229 / NCIMB 13809 / X14)).